The chain runs to 287 residues: tRNA uridine(34) hydroxylase (287 aa).

Residues 132–226 enclose the Rhodanese domain; sequence QGRPVVMLDT…YFEEVGGAHY (95 aa). The active-site Cysteine persulfide intermediate is the C186.

This sequence belongs to the TrhO family.

It catalyses the reaction uridine(34) in tRNA + AH2 + O2 = 5-hydroxyuridine(34) in tRNA + A + H2O. In terms of biological role, catalyzes oxygen-dependent 5-hydroxyuridine (ho5U) modification at position 34 in tRNAs. The protein is tRNA uridine(34) hydroxylase of Paraburkholderia phytofirmans (strain DSM 17436 / LMG 22146 / PsJN) (Burkholderia phytofirmans).